Here is a 943-residue protein sequence, read N- to C-terminus: Isoleucine--tRNA ligase (943 aa).

The 'HIGH' region signature appears at 58 to 68; that stretch reads PYANGKIHIGH. Position 567 (E567) interacts with L-isoleucyl-5'-AMP. Positions 608–612 match the 'KMSKS' region motif; that stretch reads KMSKS. Position 611 (K611) interacts with ATP. Zn(2+)-binding residues include C906, C909, C926, and C929.

This sequence belongs to the class-I aminoacyl-tRNA synthetase family. IleS type 1 subfamily. Monomer. It depends on Zn(2+) as a cofactor.

It localises to the cytoplasm. The catalysed reaction is tRNA(Ile) + L-isoleucine + ATP = L-isoleucyl-tRNA(Ile) + AMP + diphosphate. In terms of biological role, catalyzes the attachment of isoleucine to tRNA(Ile). As IleRS can inadvertently accommodate and process structurally similar amino acids such as valine, to avoid such errors it has two additional distinct tRNA(Ile)-dependent editing activities. One activity is designated as 'pretransfer' editing and involves the hydrolysis of activated Val-AMP. The other activity is designated 'posttransfer' editing and involves deacylation of mischarged Val-tRNA(Ile). This Pseudomonas putida (strain W619) protein is Isoleucine--tRNA ligase.